Here is a 403-residue protein sequence, read N- to C-terminus: Phosphoglycerate kinase (403 aa).

Substrate-binding positions include 24–26 (DLN), arginine 39, 62–65 (HLGR), arginine 121, and arginine 161. ATP is bound by residues lysine 211, glycine 299, glutamate 330, and 359–362 (GGDS).

It belongs to the phosphoglycerate kinase family. As to quaternary structure, monomer.

It localises to the cytoplasm. The catalysed reaction is (2R)-3-phosphoglycerate + ATP = (2R)-3-phospho-glyceroyl phosphate + ADP. It participates in carbohydrate degradation; glycolysis; pyruvate from D-glyceraldehyde 3-phosphate: step 2/5. The protein is Phosphoglycerate kinase of Rhodococcus erythropolis (strain PR4 / NBRC 100887).